The following is a 120-amino-acid chain: Large ribosomal subunit protein bL17 (120 aa).

Belongs to the bacterial ribosomal protein bL17 family. As to quaternary structure, part of the 50S ribosomal subunit. Contacts protein L32.

In Mesomycoplasma hyopneumoniae (strain J / ATCC 25934 / NCTC 10110) (Mycoplasma hyopneumoniae), this protein is Large ribosomal subunit protein bL17.